A 152-amino-acid chain; its full sequence is Small ribosomal subunit protein uS19 (152 aa).

This sequence belongs to the universal ribosomal protein uS19 family.

Its function is as follows. Protein S19 forms a complex with S13 that binds strongly to the 16S ribosomal RNA. The protein is Small ribosomal subunit protein uS19 (rps19) of Methanocaldococcus jannaschii (strain ATCC 43067 / DSM 2661 / JAL-1 / JCM 10045 / NBRC 100440) (Methanococcus jannaschii).